The sequence spans 575 residues: Centrosomal protein POC5 (575 aa).

Positions 1-26 (MSSDEEKYSLPVVQNDSSRGSSVSSN) are disordered. Residues S105 and S109 each carry the phosphoserine modification. The Centrin-binding (CBR) 1 repeat unit spans residues 142–173 (HEILVSDFLVSDENLQKMENVLDLWSSGLKTN). Residues 191 to 222 (MEMRKEKEKHAAHLKQLCNQINELKELQKTFE) adopt a coiled-coil conformation. Centrin-binding (CBR) repeat units follow at residues 231 to 262 (VISS…HVRA) and 263 to 295 (RQDV…VQKQ). Residues 316 to 355 (SNDYEAKVAMLSGALENAKAEIQRMQHEKEHFEDSMKKAF) adopt a coiled-coil conformation. Disordered stretches follow at residues 376-411 (AGID…MPLP) and 538-575 (KYPR…KVVD). Residues 382 to 400 (NNKKEEYGPGVQGKEHSAH) show a composition bias toward basic and acidic residues. N6-acetyllysine is present on K538. Residues 545-569 (PESSTSASRSLGTRSAHTQSLTSVH) show a composition bias toward polar residues. S564 carries the post-translational modification Phosphoserine.

Belongs to the POC5 family. Interacts with CETN2 and CETN3. Forms a microtubule-associated complex with POC1B, CETN2 and FAM161A. Interacts with CCDC15. Hyperphosphorylated during recruitment to procentrioles in G2/M phase.

Its subcellular location is the cytoplasm. It is found in the cytoskeleton. It localises to the microtubule organizing center. The protein localises to the centrosome. The protein resides in the centriole. Essential for the assembly of the distal half of centrioles, required for centriole elongation. Acts as a negative regulator of centriole elongation. This chain is Centrosomal protein POC5 (POC5), found in Homo sapiens (Human).